The sequence spans 365 residues: Mitogen-activated protein kinase HOG1A (365 aa).

The region spanning 24-303 (YTDLQPVGMG…AADALAHPYL (280 aa)) is the Protein kinase domain. ATP contacts are provided by residues 30 to 38 (VGMGAFGLL) and Lys-53. The Proton acceptor role is filled by Asp-145. Thr-175 bears the Phosphothreonine mark. The TXY signature appears at 175–177 (TGY). At Tyr-177 the chain carries Phosphotyrosine.

Belongs to the protein kinase superfamily. Ser/Thr protein kinase family. MAP kinase subfamily. HOG1 sub-subfamily. Mg(2+) is required as a cofactor. In terms of processing, phosphorylated. Dually phosphorylated on Thr-175 and Tyr-177, which activates the enzyme. Rapidly dephosphorylated upon either hypo- or hyperosmotic shock.

It localises to the cytoplasm. Its subcellular location is the nucleus. The catalysed reaction is L-seryl-[protein] + ATP = O-phospho-L-seryl-[protein] + ADP + H(+). The enzyme catalyses L-threonyl-[protein] + ATP = O-phospho-L-threonyl-[protein] + ADP + H(+). Activated by tyrosine and threonine phosphorylation. Proline-directed serine/threonine-protein kinase involved in a signal transduction pathway that is activated by changes in the osmolarity of the extracellular environment. Controls osmotic regulation of transcription of target genes. The protein is Mitogen-activated protein kinase HOG1A (HOG1A) of Wallemia ichthyophaga (strain EXF-994 / CBS 113033).